Here is a 150-residue protein sequence, read N- to C-terminus: Histone H2B.2 (150 aa).

Residues 1–16 (MAPKAEKKPAAKKPAE) are compositionally biased toward basic and acidic residues. Residues 1–57 (MAPKAEKKPAAKKPAEEEPAAEKAPAGKKPKAEKRVPAGKSAGKEGGEGKRGRKKGK) are disordered. 2 positions are modified to N6-acetyllysine: lysine 7 and lysine 34. Lysine 146 participates in a covalent cross-link: Glycyl lysine isopeptide (Lys-Gly) (interchain with G-Cter in ubiquitin).

The protein belongs to the histone H2B family. The nucleosome is a histone octamer containing two molecules each of H2A, H2B, H3 and H4 assembled in one H3-H4 heterotetramer and two H2A-H2B heterodimers. The octamer wraps approximately 147 bp of DNA. Can be acetylated to form H2BK6ac and H2BK33ac. In terms of processing, monoubiquitinated to form H2BK143ub1; may give a specific tag for epigenetic transcriptional activation.

Its subcellular location is the nucleus. The protein localises to the chromosome. Core component of nucleosome. Nucleosomes wrap and compact DNA into chromatin, limiting DNA accessibility to the cellular machineries which require DNA as a template. Histones thereby play a central role in transcription regulation, DNA repair, DNA replication and chromosomal stability. DNA accessibility is regulated via a complex set of post-translational modifications of histones, also called histone code, and nucleosome remodeling. The polypeptide is Histone H2B.2 (Zea mays (Maize)).